The following is a 158-amino-acid chain: NADH-quinone oxidoreductase subunit B (158 aa).

Positions 37, 38, 102, and 132 each coordinate [4Fe-4S] cluster.

It belongs to the complex I 20 kDa subunit family. As to quaternary structure, NDH-1 is composed of 14 different subunits. Subunits NuoB, C, D, E, F, and G constitute the peripheral sector of the complex. It depends on [4Fe-4S] cluster as a cofactor.

Its subcellular location is the cell inner membrane. The enzyme catalyses a quinone + NADH + 5 H(+)(in) = a quinol + NAD(+) + 4 H(+)(out). NDH-1 shuttles electrons from NADH, via FMN and iron-sulfur (Fe-S) centers, to quinones in the respiratory chain. Couples the redox reaction to proton translocation (for every two electrons transferred, four hydrogen ions are translocated across the cytoplasmic membrane), and thus conserves the redox energy in a proton gradient. In Dechloromonas aromatica (strain RCB), this protein is NADH-quinone oxidoreductase subunit B.